The chain runs to 467 residues: 3-isopropylmalate dehydratase large subunit (467 aa).

Positions 347, 407, and 410 each coordinate [4Fe-4S] cluster.

This sequence belongs to the aconitase/IPM isomerase family. LeuC type 1 subfamily. In terms of assembly, heterodimer of LeuC and LeuD. Requires [4Fe-4S] cluster as cofactor.

The catalysed reaction is (2R,3S)-3-isopropylmalate = (2S)-2-isopropylmalate. It participates in amino-acid biosynthesis; L-leucine biosynthesis; L-leucine from 3-methyl-2-oxobutanoate: step 2/4. In terms of biological role, catalyzes the isomerization between 2-isopropylmalate and 3-isopropylmalate, via the formation of 2-isopropylmaleate. The chain is 3-isopropylmalate dehydratase large subunit from Synechococcus sp. (strain JA-2-3B'a(2-13)) (Cyanobacteria bacterium Yellowstone B-Prime).